Reading from the N-terminus, the 355-residue chain is Dual-specificity RNA methyltransferase RlmN (355 aa).

Glu-86 (proton acceptor) is an active-site residue. One can recognise a Radical SAM core domain in the interval 105–338; that stretch reads KEARYTVCVS…CTIRESKGLD (234 aa). Cys-112 and Cys-343 are disulfide-bonded. Cys-119, Cys-123, and Cys-126 together coordinate [4Fe-4S] cluster. S-adenosyl-L-methionine contacts are provided by residues 169-170, Ser-201, 224-226, and Asn-300; these read GE and SLH. Catalysis depends on Cys-343, which acts as the S-methylcysteine intermediate.

The protein belongs to the radical SAM superfamily. RlmN family. [4Fe-4S] cluster is required as a cofactor.

The protein localises to the cytoplasm. The enzyme catalyses adenosine(2503) in 23S rRNA + 2 reduced [2Fe-2S]-[ferredoxin] + 2 S-adenosyl-L-methionine = 2-methyladenosine(2503) in 23S rRNA + 5'-deoxyadenosine + L-methionine + 2 oxidized [2Fe-2S]-[ferredoxin] + S-adenosyl-L-homocysteine. The catalysed reaction is adenosine(37) in tRNA + 2 reduced [2Fe-2S]-[ferredoxin] + 2 S-adenosyl-L-methionine = 2-methyladenosine(37) in tRNA + 5'-deoxyadenosine + L-methionine + 2 oxidized [2Fe-2S]-[ferredoxin] + S-adenosyl-L-homocysteine. Its function is as follows. Specifically methylates position 2 of adenine 2503 in 23S rRNA and position 2 of adenine 37 in tRNAs. m2A2503 modification seems to play a crucial role in the proofreading step occurring at the peptidyl transferase center and thus would serve to optimize ribosomal fidelity. The protein is Dual-specificity RNA methyltransferase RlmN of Nitratiruptor sp. (strain SB155-2).